Consider the following 330-residue polypeptide: Ketol-acid reductoisomerase (NADP(+)) (330 aa).

In terms of domain architecture, KARI N-terminal Rossmann spans 3–184; that stretch reads LPVYYDKDID…GGGRMGVLKT (182 aa). NADP(+)-binding positions include 26–29, serine 52, and serine 54; that span reads YGAQ. Residue histidine 109 is part of the active site. Glycine 135 contributes to the NADP(+) binding site. Positions 185 to 329 constitute a KARI C-terminal knotted domain; sequence SFKEECESDL…EILRAPFNHK (145 aa). 4 residues coordinate Mg(2+): aspartate 193, glutamate 197, glutamate 229, and glutamate 233. Serine 254 serves as a coordination point for substrate.

Belongs to the ketol-acid reductoisomerase family. It depends on Mg(2+) as a cofactor.

It catalyses the reaction (2R)-2,3-dihydroxy-3-methylbutanoate + NADP(+) = (2S)-2-acetolactate + NADPH + H(+). The enzyme catalyses (2R,3R)-2,3-dihydroxy-3-methylpentanoate + NADP(+) = (S)-2-ethyl-2-hydroxy-3-oxobutanoate + NADPH + H(+). Its pathway is amino-acid biosynthesis; L-isoleucine biosynthesis; L-isoleucine from 2-oxobutanoate: step 2/4. It participates in amino-acid biosynthesis; L-valine biosynthesis; L-valine from pyruvate: step 2/4. Functionally, involved in the biosynthesis of branched-chain amino acids (BCAA). Catalyzes an alkyl-migration followed by a ketol-acid reduction of (S)-2-acetolactate (S2AL) to yield (R)-2,3-dihydroxy-isovalerate. In the isomerase reaction, S2AL is rearranged via a Mg-dependent methyl migration to produce 3-hydroxy-3-methyl-2-ketobutyrate (HMKB). In the reductase reaction, this 2-ketoacid undergoes a metal-dependent reduction by NADPH to yield (R)-2,3-dihydroxy-isovalerate. The protein is Ketol-acid reductoisomerase (NADP(+)) of Helicobacter pylori (strain HPAG1).